Consider the following 591-residue polypeptide: NADH-quinone oxidoreductase subunit C/D (591 aa).

Residues 1–182 (MVTVVENIDP…TPYFLNTAKQ (182 aa)) are NADH dehydrogenase I subunit C. Positions 206–591 (DFMFLNIGPN…IDVVMADCDR (386 aa)) are NADH dehydrogenase I subunit D.

The protein in the N-terminal section; belongs to the complex I 30 kDa subunit family. It in the C-terminal section; belongs to the complex I 49 kDa subunit family. In terms of assembly, NDH-1 is composed of 13 different subunits. Subunits NuoB, CD, E, F, and G constitute the peripheral sector of the complex.

The protein localises to the cell inner membrane. The catalysed reaction is a quinone + NADH + 5 H(+)(in) = a quinol + NAD(+) + 4 H(+)(out). Its function is as follows. NDH-1 shuttles electrons from NADH, via FMN and iron-sulfur (Fe-S) centers, to quinones in the respiratory chain. The immediate electron acceptor for the enzyme in this species is believed to be ubiquinone. Couples the redox reaction to proton translocation (for every two electrons transferred, four hydrogen ions are translocated across the cytoplasmic membrane), and thus conserves the redox energy in a proton gradient. This chain is NADH-quinone oxidoreductase subunit C/D, found in Psychrobacter arcticus (strain DSM 17307 / VKM B-2377 / 273-4).